Here is a 142-residue protein sequence, read N- to C-terminus: Large ribosomal subunit protein uL13 (142 aa).

This sequence belongs to the universal ribosomal protein uL13 family. As to quaternary structure, part of the 50S ribosomal subunit.

Its function is as follows. This protein is one of the early assembly proteins of the 50S ribosomal subunit, although it is not seen to bind rRNA by itself. It is important during the early stages of 50S assembly. The polypeptide is Large ribosomal subunit protein uL13 (Acidithiobacillus ferrooxidans (strain ATCC 23270 / DSM 14882 / CIP 104768 / NCIMB 8455) (Ferrobacillus ferrooxidans (strain ATCC 23270))).